A 184-amino-acid polypeptide reads, in one-letter code: Large ribosomal subunit protein uL6 (184 aa).

The protein belongs to the universal ribosomal protein uL6 family. Part of the 50S ribosomal subunit.

This protein binds to the 23S rRNA, and is important in its secondary structure. It is located near the subunit interface in the base of the L7/L12 stalk, and near the tRNA binding site of the peptidyltransferase center. The sequence is that of Large ribosomal subunit protein uL6 from Pseudothermotoga lettingae (strain ATCC BAA-301 / DSM 14385 / NBRC 107922 / TMO) (Thermotoga lettingae).